Consider the following 68-residue polypeptide: Conotoxin ba14a (68 aa).

Residues 1–20 (MKLSVMFIVALVLSLSMTDG) form the signal peptide. Positions 21–50 (LPRRAENGGRIFRQHSPDSMDPQTRQIKTR) are excised as a propeptide.

Post-translationally, contains 2 disulfide bonds. In terms of tissue distribution, expressed by the venom duct.

The protein localises to the secreted. This is Conotoxin ba14a from Conus bayani (Bayan's cone).